The primary structure comprises 305 residues: UDP-3-O-acyl-N-acetylglucosamine deacetylase (305 aa).

Zn(2+) is bound by residues histidine 79, histidine 238, and aspartate 242. The active-site Proton donor is histidine 265.

The protein belongs to the LpxC family. Zn(2+) is required as a cofactor.

It catalyses the reaction a UDP-3-O-[(3R)-3-hydroxyacyl]-N-acetyl-alpha-D-glucosamine + H2O = a UDP-3-O-[(3R)-3-hydroxyacyl]-alpha-D-glucosamine + acetate. It functions in the pathway glycolipid biosynthesis; lipid IV(A) biosynthesis; lipid IV(A) from (3R)-3-hydroxytetradecanoyl-[acyl-carrier-protein] and UDP-N-acetyl-alpha-D-glucosamine: step 2/6. Catalyzes the hydrolysis of UDP-3-O-myristoyl-N-acetylglucosamine to form UDP-3-O-myristoylglucosamine and acetate, the committed step in lipid A biosynthesis. This is UDP-3-O-acyl-N-acetylglucosamine deacetylase from Vibrio vulnificus (strain CMCP6).